The chain runs to 744 residues: Zinc finger protein 366 (744 aa).

The disordered stretch occupies residues 206 to 228 (KQPPEPLLPRKAEPQESEETKQK). Over residues 213–228 (LPRKAEPQESEETKQK) the composition is skewed to basic and acidic residues. 11 consecutive C2H2-type zinc fingers follow at residues 253 to 275 (WQCPTCEKSYTSKYNLVTHILGH), 281 to 303 (HACTHCGKLFKQLSHLHTHMLTH), 309 to 331 (HKCQVCHKAFTQTSHLKRHMMQH), 337 to 359 (HNCRVCGRGFAYPSELKAHEAKH), 365 to 387 (NICVECGLDFPTLAQLKRHLTTH), 393 to 415 (YNCSECDKTFQYPSQLQNHMMKH), 421 to 443 (YICSECGMEFVQPHHLKQHSLTH), 449 to 471 (HKCGICGREFTLLANMKRHVLIH), 477 to 499 (YQCHLCYKSFVQKQTLKAHMIVH), 505 to 527 (FKCKLCGKEFNRMHNLMGHMHLH), and 533 to 556 (FKCLYCPSKFTLKGNLTRHMKVKH). Residues 455–744 (GREFTLLANM…MEKQAVLLGI (290 aa)) are interaction with NRIP1. The short motif at 590–594 (PFDLS) is the PXDLS element. Disordered stretches follow at residues 603–627 (VFQSDGESAQGSHCHEEEEEDNCYE) and 664–692 (KEEKEDASKGEWEKRSKGDLGAEGGQERD).

As to quaternary structure, interacts with ESR1 and NRIP1. Interacts (via PXDLS motif) with CTBP1. As to expression, expressed in immature and mature dendritic cells (DCs). Not detected in other blood cell types.

It localises to the nucleus. Has transcriptional repression activity. Acts as a corepressor of ESR1; the function seems to involve CTBP1 and histone deacetylases. This chain is Zinc finger protein 366, found in Homo sapiens (Human).